Reading from the N-terminus, the 185-residue chain is UPF0397 protein AYWB_013 (185 aa).

5 helical membrane passes run 13–33 (IGLS…PVGF), 42–62 (AFLA…VGLI), 69–89 (FFLF…IGFI), 109–129 (IVYF…FFAP), and 148–168 (FLIV…LMTI).

The protein belongs to the UPF0397 family.

The protein localises to the cell membrane. In Aster yellows witches'-broom phytoplasma (strain AYWB), this protein is UPF0397 protein AYWB_013.